A 224-amino-acid chain; its full sequence is Zinc finger C4H2 domain-containing protein (224 aa).

A coiled-coil region spans residues 11-104; the sequence is LESIKEIRNK…RRLHDEYKPL (94 aa). A C4H2-type zinc finger spans residues 189 to 206; the sequence is CLSCHQQIHRNAPICPLC.

In terms of tissue distribution, expressed in fetal tissues, including in brain, intestine, lung, kidney and muscle. Isoform 1 is expressed in numerous fetal brain regions. Isoform 3 is highly expressed in numerous fetal brain regions and spinal cord.

Its subcellular location is the cytoplasm. The protein localises to the nucleus. The protein resides in the postsynaptic cell membrane. Its function is as follows. Plays a role in interneurons differentiation. Involved in neuronal development and in neuromuscular junction formation. This chain is Zinc finger C4H2 domain-containing protein (ZC4H2), found in Homo sapiens (Human).